We begin with the raw amino-acid sequence, 322 residues long: Sideroflexin-1 (322 aa).

Position 2 is an N-acetylserine (Ser2). Residues 2 to 102 (SGEVPPNINI…MSAQVPMNMT (101 aa)) lie on the Mitochondrial matrix side of the membrane. A helical transmembrane segment spans residues 103–120 (ITGCMMTFYRTTPAVLFW). Residues 121-146 (QWINQSFNAVVNYTNRSGDAPLTVNE) are Mitochondrial intermembrane-facing. Residues 147 to 167 (LGTAYVSATTGAVATALGLNA) traverse the membrane as a helical segment. Over 168-174 (LTKRVSP) the chain is Mitochondrial matrix. Residues 175 to 195 (LIGRFVPFAAVAAANCINIPL) traverse the membrane as a helical segment. The Mitochondrial intermembrane segment spans residues 196–228 (MRQRELKVGIPVTDENGTRLGESTNAAKQAITQ). The chain crosses the membrane as a helical span at residues 229 to 249 (VVISRILMAAPGMAIPPFIMN). Residues 250-266 (TLEKKAFLKRFPWMSAP) lie on the Mitochondrial matrix side of the membrane. Residues 267-287 (IQVTLVGFCLVFATPLCCALF) traverse the membrane as a helical segment. Over 288–322 (PQKSSMSVTSLEDELQASIQRTHPEIRRVYFNKGL) the chain is Mitochondrial intermembrane.

This sequence belongs to the sideroflexin family. As to expression, widely expressed, with highest expression in kidney and liver.

The protein resides in the mitochondrion inner membrane. The catalysed reaction is L-serine(in) = L-serine(out). It carries out the reaction L-alanine(in) = L-alanine(out). The enzyme catalyses L-cysteine(in) = L-cysteine(out). In terms of biological role, amino acid transporter importing serine, an essential substrate of the mitochondrial branch of the one-carbon pathway, into mitochondria. Mitochondrial serine is then converted to glycine and formate, which exits to the cytosol where it is used to generate the charged folates that serve as one-carbon donors. May also transport other amino acids including alanine and cysteine. This Mus musculus (Mouse) protein is Sideroflexin-1.